The following is a 137-amino-acid chain: Putative pre-16S rRNA nuclease (137 aa).

The protein belongs to the YqgF nuclease family.

The protein resides in the cytoplasm. Could be a nuclease involved in processing of the 5'-end of pre-16S rRNA. This is Putative pre-16S rRNA nuclease from Clostridium botulinum (strain Eklund 17B / Type B).